Consider the following 500-residue polypeptide: GTPase Der (500 aa).

EngA-type G domains lie at Pro3 to Leu166 and Ile211 to Thr384. GTP contacts are provided by residues Gly9 to Ser16, Asp56 to Ile60, Asn118 to Asp121, Gly217 to Ser224, Asp264 to Val268, and Asn329 to Asp332. Residues Lys385–Glu469 form the KH-like domain. Positions Leu481 to Lys500 are disordered. Residues Gln486 to Lys500 are compositionally biased toward basic residues.

This sequence belongs to the TRAFAC class TrmE-Era-EngA-EngB-Septin-like GTPase superfamily. EngA (Der) GTPase family. Associates with the 50S ribosomal subunit.

In terms of biological role, GTPase that plays an essential role in the late steps of ribosome biogenesis. In Aliivibrio salmonicida (strain LFI1238) (Vibrio salmonicida (strain LFI1238)), this protein is GTPase Der.